A 374-amino-acid polypeptide reads, in one-letter code: Queuine tRNA-ribosyltransferase (374 aa).

The active-site Proton acceptor is the D91. Residues 91-95 (DSGGY), D145, Q189, and G216 contribute to the substrate site. The tract at residues 247 to 253 (GVGTVPD) is RNA binding. The active-site Nucleophile is the D266. The RNA binding; important for wobble base 34 recognition stretch occupies residues 271 to 275 (TRNAR). 4 residues coordinate Zn(2+): C304, C306, C309, and H335.

It belongs to the queuine tRNA-ribosyltransferase family. As to quaternary structure, homodimer. Within each dimer, one monomer is responsible for RNA recognition and catalysis, while the other monomer binds to the replacement base PreQ1. Zn(2+) is required as a cofactor.

The enzyme catalyses 7-aminomethyl-7-carbaguanine + guanosine(34) in tRNA = 7-aminomethyl-7-carbaguanosine(34) in tRNA + guanine. The protein operates within tRNA modification; tRNA-queuosine biosynthesis. Functionally, catalyzes the base-exchange of a guanine (G) residue with the queuine precursor 7-aminomethyl-7-deazaguanine (PreQ1) at position 34 (anticodon wobble position) in tRNAs with GU(N) anticodons (tRNA-Asp, -Asn, -His and -Tyr). Catalysis occurs through a double-displacement mechanism. The nucleophile active site attacks the C1' of nucleotide 34 to detach the guanine base from the RNA, forming a covalent enzyme-RNA intermediate. The proton acceptor active site deprotonates the incoming PreQ1, allowing a nucleophilic attack on the C1' of the ribose to form the product. After dissociation, two additional enzymatic reactions on the tRNA convert PreQ1 to queuine (Q), resulting in the hypermodified nucleoside queuosine (7-(((4,5-cis-dihydroxy-2-cyclopenten-1-yl)amino)methyl)-7-deazaguanosine). The polypeptide is Queuine tRNA-ribosyltransferase (Leptospira interrogans serogroup Icterohaemorrhagiae serovar Lai (strain 56601)).